A 152-amino-acid polypeptide reads, in one-letter code: Ribosomal RNA large subunit methyltransferase H (152 aa).

Residues L68, G100, and 119 to 124 (FGPMTW) contribute to the S-adenosyl-L-methionine site.

Belongs to the RNA methyltransferase RlmH family. Homodimer.

The protein resides in the cytoplasm. It carries out the reaction pseudouridine(1915) in 23S rRNA + S-adenosyl-L-methionine = N(3)-methylpseudouridine(1915) in 23S rRNA + S-adenosyl-L-homocysteine + H(+). Its function is as follows. Specifically methylates the pseudouridine at position 1915 (m3Psi1915) in 23S rRNA. The polypeptide is Ribosomal RNA large subunit methyltransferase H (Rhodospirillum centenum (strain ATCC 51521 / SW)).